A 413-amino-acid polypeptide reads, in one-letter code: Multifunctional CCA protein (413 aa).

2 residues coordinate ATP: G8 and R11. CTP contacts are provided by G8 and R11. Mg(2+) contacts are provided by D21 and D23. Positions 91, 143, and 146 each coordinate ATP. CTP contacts are provided by R91, R143, and R146. Residues 232-333 (TGVHVMMVID…VRLLERADAL (102 aa)) enclose the HD domain.

This sequence belongs to the tRNA nucleotidyltransferase/poly(A) polymerase family. Bacterial CCA-adding enzyme type 1 subfamily. In terms of assembly, monomer. Can also form homodimers and oligomers. Mg(2+) serves as cofactor. The cofactor is Ni(2+).

The catalysed reaction is a tRNA precursor + 2 CTP + ATP = a tRNA with a 3' CCA end + 3 diphosphate. It catalyses the reaction a tRNA with a 3' CCA end + 2 CTP + ATP = a tRNA with a 3' CCACCA end + 3 diphosphate. Catalyzes the addition and repair of the essential 3'-terminal CCA sequence in tRNAs without using a nucleic acid template. Adds these three nucleotides in the order of C, C, and A to the tRNA nucleotide-73, using CTP and ATP as substrates and producing inorganic pyrophosphate. tRNA 3'-terminal CCA addition is required both for tRNA processing and repair. Also involved in tRNA surveillance by mediating tandem CCA addition to generate a CCACCA at the 3' terminus of unstable tRNAs. While stable tRNAs receive only 3'-terminal CCA, unstable tRNAs are marked with CCACCA and rapidly degraded. This Burkholderia pseudomallei (strain 668) protein is Multifunctional CCA protein.